Reading from the N-terminus, the 392-residue chain is Formate-dependent phosphoribosylglycinamide formyltransferase (392 aa).

N(1)-(5-phospho-beta-D-ribosyl)glycinamide is bound by residues 22–23 (EL) and glutamate 82. Residues arginine 114, lysine 155, 160 to 165 (SSGKGQ), 195 to 198 (EGVV), and glutamate 203 each bind ATP. One can recognise an ATP-grasp domain in the interval 119-308 (RLAAEELWVP…EFALHVRAFL (190 aa)). Residues glutamate 267 and glutamate 279 each coordinate Mg(2+). Residues aspartate 286, lysine 355, and 362-363 (RR) contribute to the N(1)-(5-phospho-beta-D-ribosyl)glycinamide site.

It belongs to the PurK/PurT family. As to quaternary structure, homodimer.

It catalyses the reaction N(1)-(5-phospho-beta-D-ribosyl)glycinamide + formate + ATP = N(2)-formyl-N(1)-(5-phospho-beta-D-ribosyl)glycinamide + ADP + phosphate + H(+). The protein operates within purine metabolism; IMP biosynthesis via de novo pathway; N(2)-formyl-N(1)-(5-phospho-D-ribosyl)glycinamide from N(1)-(5-phospho-D-ribosyl)glycinamide (formate route): step 1/1. Involved in the de novo purine biosynthesis. Catalyzes the transfer of formate to 5-phospho-ribosyl-glycinamide (GAR), producing 5-phospho-ribosyl-N-formylglycinamide (FGAR). Formate is provided by PurU via hydrolysis of 10-formyl-tetrahydrofolate. The polypeptide is Formate-dependent phosphoribosylglycinamide formyltransferase (Erwinia tasmaniensis (strain DSM 17950 / CFBP 7177 / CIP 109463 / NCPPB 4357 / Et1/99)).